We begin with the raw amino-acid sequence, 333 residues long: NADH-quinone oxidoreductase subunit H (333 aa).

The next 8 helical transmembrane spans lie at Phe15–Tyr35, Phe88–Phe108, Ile117–Thr137, Ile159–Leu179, Val191–Glu211, Trp239–Val259, Gly272–Phe294, and Ile313–Phe333.

This sequence belongs to the complex I subunit 1 family. In terms of assembly, NDH-1 is composed of 14 different subunits. Subunits NuoA, H, J, K, L, M, N constitute the membrane sector of the complex.

It is found in the cell membrane. The enzyme catalyses a quinone + NADH + 5 H(+)(in) = a quinol + NAD(+) + 4 H(+)(out). In terms of biological role, NDH-1 shuttles electrons from NADH, via FMN and iron-sulfur (Fe-S) centers, to quinones in the respiratory chain. The immediate electron acceptor for the enzyme in this species is believed to be ubiquinone. Couples the redox reaction to proton translocation (for every two electrons transferred, four hydrogen ions are translocated across the cytoplasmic membrane), and thus conserves the redox energy in a proton gradient. This subunit may bind ubiquinone. The polypeptide is NADH-quinone oxidoreductase subunit H (Bacillus mycoides (strain KBAB4) (Bacillus weihenstephanensis)).